Reading from the N-terminus, the 296-residue chain is Tuberculosinyl adenosine transferase (296 aa).

It belongs to the diterpene synthase family. In terms of assembly, homodimer. Requires Mg(2+) as cofactor.

The enzyme catalyses tuberculosinyl diphosphate + adenosine + H(+) = 1-tuberculosinyladenosine + diphosphate. The catalysed reaction is tuberculosinyl diphosphate + H2O = tuberculosinol + diphosphate. It catalyses the reaction tuberculosinyl diphosphate + H2O = (13R)-edaxadiene + diphosphate. It carries out the reaction tuberculosinyl diphosphate + H2O = (13S)-edaxadiene + diphosphate. In terms of biological role, tuberculosinyl transferase that catalyzes the condensation of adenosine and tuberculosinyl diphosphate (TbPP) to generate 1-tuberculosinyladenosine (1-TbAd), which acts as an antiacid that directly protects M.tuberculosis from acid pH and physically remodels M.tuberculosis phagolysosomes. In addition, acts as a phosphatase that catalyzes the diphosphate-removal from TbPP to produce both tuberculosinol (TOH) and isotuberculosinol (iso-TOH). The polypeptide is Tuberculosinyl adenosine transferase (Mycobacterium tuberculosis (strain CDC 1551 / Oshkosh)).